The chain runs to 100 residues: MAKKSMIEREKKRARLVEKYAAKREALKEAFHQAEDYEEKIEIHRQLQQLPRNSSPNRRRNRCWATGRPRGYYRDFGLSRNVLREWAHEGLLPGVVKSSW.

Belongs to the universal ribosomal protein uS14 family. In terms of assembly, part of the 30S ribosomal subunit. Contacts proteins S3 and S10.

In terms of biological role, binds 16S rRNA, required for the assembly of 30S particles and may also be responsible for determining the conformation of the 16S rRNA at the A site. The sequence is that of Small ribosomal subunit protein uS14 from Rippkaea orientalis (strain PCC 8801 / RF-1) (Cyanothece sp. (strain PCC 8801)).